Consider the following 66-residue polypeptide: UPF0337 protein SAG0619 (66 aa).

The interval 1–22 (MSQEKLKSKLDQAKGGAKEGFG) is disordered.

This sequence belongs to the UPF0337 (CsbD) family.

In Streptococcus agalactiae serotype V (strain ATCC BAA-611 / 2603 V/R), this protein is UPF0337 protein SAG0619.